The primary structure comprises 196 residues: UMP-CMP kinase (196 aa).

Gly-13–Thr-18 serves as a coordination point for ATP. The tract at residues Ser-33 to Val-63 is NMP. A ribonucleoside 5'-phosphate-binding positions include Arg-39, Arg-61–Val-63, and Gly-93–Arg-96. Residue Asn-100 participates in CMP binding. Residues Glu-133–Asp-143 are LID. Arg-134 lines the ATP pocket. 2 residues coordinate a ribonucleoside 5'-phosphate: Arg-140 and Arg-151. Residue Lys-179 coordinates ATP.

This sequence belongs to the adenylate kinase family. UMP-CMP kinase subfamily. In terms of assembly, monomer. Requires Mg(2+) as cofactor.

The protein localises to the cytoplasm. It is found in the nucleus. The catalysed reaction is CMP + ATP = CDP + ADP. It catalyses the reaction dCMP + ATP = dCDP + ADP. The enzyme catalyses UMP + ATP = UDP + ADP. It carries out the reaction a 2'-deoxyribonucleoside 5'-diphosphate + ATP = a 2'-deoxyribonucleoside 5'-triphosphate + ADP. The catalysed reaction is a ribonucleoside 5'-diphosphate + ATP = a ribonucleoside 5'-triphosphate + ADP. In terms of biological role, catalyzes the phosphorylation of pyrimidine nucleoside monophosphates at the expense of ATP. Plays an important role in de novo pyrimidine nucleotide biosynthesis. Has preference for UMP and CMP as phosphate acceptors. Also displays broad nucleoside diphosphate kinase activity. In Xenopus tropicalis (Western clawed frog), this protein is UMP-CMP kinase (cmpk1).